The following is a 304-amino-acid chain: Cell division protein ZipA (304 aa).

Residues 1 to 5 are Periplasmic-facing; it reads MQDLR. A helical membrane pass occupies residues 6-26; it reads LILIVVGAIAIIALLLHGLWT. The Cytoplasmic portion of the chain corresponds to 27–304; it reads SRKERSSVFR…IRDVIDANSH (278 aa). The segment at 31 to 165 is disordered; sequence RSSVFRDRPH…PEPQSQPKQK (135 aa). The span at 121 to 132 shows a compositional bias: basic and acidic residues; sequence ARPETHKPDQPE. Residues 137–158 are compositionally biased toward low complexity; sequence AAPAAAETAPAPAEPAQKTPEP.

This sequence belongs to the ZipA family. As to quaternary structure, interacts with FtsZ via their C-terminal domains.

It localises to the cell inner membrane. In terms of biological role, essential cell division protein that stabilizes the FtsZ protofilaments by cross-linking them and that serves as a cytoplasmic membrane anchor for the Z ring. Also required for the recruitment to the septal ring of downstream cell division proteins. The polypeptide is Cell division protein ZipA (Erwinia tasmaniensis (strain DSM 17950 / CFBP 7177 / CIP 109463 / NCPPB 4357 / Et1/99)).